A 154-amino-acid polypeptide reads, in one-letter code: UPF0178 protein Glov_0658 (154 aa).

This sequence belongs to the UPF0178 family.

This is UPF0178 protein Glov_0658 from Trichlorobacter lovleyi (strain ATCC BAA-1151 / DSM 17278 / SZ) (Geobacter lovleyi).